We begin with the raw amino-acid sequence, 429 residues long: D-amino acid dehydrogenase (429 aa).

3–17 (VVVLGSGVVGVTSAY) is a binding site for FAD.

This sequence belongs to the DadA oxidoreductase family. FAD serves as cofactor.

The catalysed reaction is a D-alpha-amino acid + A + H2O = a 2-oxocarboxylate + AH2 + NH4(+). The protein operates within amino-acid degradation; D-alanine degradation; NH(3) and pyruvate from D-alanine: step 1/1. Its function is as follows. Oxidative deamination of D-amino acids. This chain is D-amino acid dehydrogenase, found in Paraburkholderia xenovorans (strain LB400).